The sequence spans 213 residues: Translation initiation factor IF-3 (213 aa).

The disordered stretch occupies residues Val-178–Ser-213. Positions Ile-182–Lys-201 are enriched in basic and acidic residues.

The protein belongs to the IF-3 family. Monomer.

The protein resides in the cytoplasm. IF-3 binds to the 30S ribosomal subunit and shifts the equilibrium between 70S ribosomes and their 50S and 30S subunits in favor of the free subunits, thus enhancing the availability of 30S subunits on which protein synthesis initiation begins. The chain is Translation initiation factor IF-3 from Solibacter usitatus (strain Ellin6076).